We begin with the raw amino-acid sequence, 509 residues long: L-arabinose isomerase (509 aa).

Mn(2+)-binding residues include glutamate 313, glutamate 340, histidine 357, and histidine 456.

The protein belongs to the arabinose isomerase family. It depends on Mn(2+) as a cofactor.

The enzyme catalyses beta-L-arabinopyranose = L-ribulose. Its pathway is carbohydrate degradation; L-arabinose degradation via L-ribulose; D-xylulose 5-phosphate from L-arabinose (bacterial route): step 1/3. Its function is as follows. Catalyzes the conversion of L-arabinose to L-ribulose. The chain is L-arabinose isomerase from Bacteroides thetaiotaomicron (strain ATCC 29148 / DSM 2079 / JCM 5827 / CCUG 10774 / NCTC 10582 / VPI-5482 / E50).